The chain runs to 333 residues: Photosystem II assembly lipoprotein Ycf48 (333 aa).

The first 23 residues, Met-1–Gly-23, serve as a signal peptide directing secretion. Cys-24 is lipidated: N-palmitoyl cysteine. Residue Cys-24 is the site of S-diacylglycerol cysteine attachment.

It belongs to the Ycf48 family. As to quaternary structure, part of early PSII assembly complexes which includes D1 (psbA) and PsbI; not found in mature PSII. Binds to the lumenal side of PSII complexes. Interacts with YidC.

Its subcellular location is the cellular thylakoid membrane. Functionally, a factor required for optimal assembly of photosystem II (PSII), acting in the early stages of PSII assembly. Also plays a role in replacement of photodamaged D1 (psbA). Assists YidC in synthesis of chlorophyll-binding proteins. This Synechococcus sp. (strain CC9902) protein is Photosystem II assembly lipoprotein Ycf48.